Reading from the N-terminus, the 92-residue chain is Small integral membrane protein 12 (92 aa).

The chain crosses the membrane as a helical span at residues 15–34; sequence YVTFPVAFVVGAVGYHLEWF.

This sequence belongs to the SMIM12 family.

It is found in the membrane. The polypeptide is Small integral membrane protein 12 (SMIM12) (Nomascus leucogenys (Northern white-cheeked gibbon)).